The chain runs to 207 residues: Large ribosomal subunit protein uL4 (207 aa).

A disordered region spans residues 45-78 (RQGTHAVKNRSARRGGGRKPWRQKGTGRARQGSI). Positions 51 to 71 (VKNRSARRGGGRKPWRQKGTG) are enriched in basic residues.

Belongs to the universal ribosomal protein uL4 family. Part of the 50S ribosomal subunit.

Its function is as follows. One of the primary rRNA binding proteins, this protein initially binds near the 5'-end of the 23S rRNA. It is important during the early stages of 50S assembly. It makes multiple contacts with different domains of the 23S rRNA in the assembled 50S subunit and ribosome. Forms part of the polypeptide exit tunnel. The protein is Large ribosomal subunit protein uL4 of Lactiplantibacillus plantarum (strain ATCC BAA-793 / NCIMB 8826 / WCFS1) (Lactobacillus plantarum).